The primary structure comprises 28 residues: Mu-theraphotoxin-Hsp1a (28 aa).

3 disulfides stabilise this stretch: C2–C16, C9–C21, and C15–C25. Asparagine amide is present on N28.

It belongs to the neurotoxin 30 (phrixotoxin) family. In terms of tissue distribution, expressed by the venom gland.

Its subcellular location is the secreted. Potent and selective inhibitor of Nav1.7/SCN9A sodium channels. Inhibits Nav1.7/SCN9A peak current (IC(50)=13 nM). In vivo, does not induce visible signs of toxicity when intravenously injected into mice. This chain is Mu-theraphotoxin-Hsp1a, found in Homoeomma sp. (Peruvian tarantula).